We begin with the raw amino-acid sequence, 152 residues long: SKP1-like protein 8 (152 aa).

The tract at residues 94–152 (TNAANFLNNKSLLHLAGQTVADMIKGNTPKQMREFFNIENDLTPEEEAAIRRENKWAFE) is interaction with the F-box domain of F-box proteins.

It belongs to the SKP1 family. In terms of assembly, part of a SCF (SKP1-cullin-F-box) protein ligase complex. In terms of tissue distribution, restricted to siliques.

It is found in the nucleus. Its pathway is protein modification; protein ubiquitination. In terms of biological role, involved in ubiquitination and subsequent proteasomal degradation of target proteins. Together with CUL1, RBX1 and a F-box protein, it forms a SCF E3 ubiquitin ligase complex. The functional specificity of this complex depends on the type of F-box protein. In the SCF complex, it serves as an adapter that links the F-box protein to CUL1. The chain is SKP1-like protein 8 (ASK8) from Arabidopsis thaliana (Mouse-ear cress).